Reading from the N-terminus, the 566-residue chain is Alpha-N-acetylgalactosaminide alpha-2,6-sialyltransferase 1 (566 aa).

Residues 1–16 (MGFLIRRLPKDSRIFR) are Cytoplasmic-facing. Residues 17–37 (WLLILTVFSFIITSFSALFGM) traverse the membrane as a helical; Signal-anchor for type II membrane protein segment. The Lumenal portion of the chain corresponds to 38–566 (EKSIFRQLKI…ENIMKLYQRS (529 aa)). Residues asparagine 66 and asparagine 132 are each glycosylated (N-linked (GlcNAc...) asparagine). The tract at residues 138-161 (ASVVERTKEKTTARPVPGVGEADG) is disordered. Asparagine 192 is a glycosylation site (N-linked (GlcNAc...) asparagine). Residues 247-254 (SSSPVSTC) form repeat 1. The 2 X 8 AA repeats of S-S-S-X-V-S-T-C stretch occupies residues 247–337 (SSSPVSTCSE…ANSSSNVSTC (91 aa)). Cystine bridges form between cysteine 254/cysteine 337 and cysteine 340/cysteine 508. N-linked (GlcNAc...) asparagine glycosylation is found at asparagine 275, asparagine 286, asparagine 306, asparagine 329, and asparagine 333. Copy 2 of the repeat occupies 330-337 (SSSNVSTC).

This sequence belongs to the glycosyltransferase 29 family. Heart, kidney, testes, brain, liver and lung.

The protein resides in the golgi apparatus membrane. It catalyses the reaction a beta-D-galactosyl-(1-&gt;3)-N-acetyl-alpha-D-galactosaminyl derivative + CMP-N-acetyl-beta-neuraminate = a beta-D-galactosyl-(1-&gt;3)-[N-acetyl-alpha-neuraminyl-(2-&gt;6)]-N-acetyl-alpha-D-galactosaminyl derivative + CMP + H(+). The enzyme catalyses a 3-O-[N-acetyl-alpha-D-galactosaminyl]-L-seryl-[protein] + CMP-N-acetyl-beta-neuraminate = a 3-O-[N-acetyl-alpha-neuraminosyl-(2-&gt;6)-N-acetyl-alpha-D-galactosaminyl]-L-seryl-[protein] + CMP + H(+). The catalysed reaction is a 3-O-[N-acetyl-alpha-D-galactosaminyl]-L-threonyl-[protein] + CMP-N-acetyl-beta-neuraminate = a 3-O-[N-acetyl-alpha-neuraminosyl-(2-&gt;6)-N-acetyl-alpha-D-galactosaminyl]-L-threonyl-[protein] + CMP + H(+). It carries out the reaction a 3-O-[beta-D-galactosyl-(1-&gt;3)-N-acetyl-alpha-D-galactosaminyl]-L-seryl-[protein] + CMP-N-acetyl-beta-neuraminate = a 3-O-{beta-D-galactosyl-(1-&gt;3)-[N-acetyl-alpha-neuraminosyl-(2-&gt;6)]-N-acetyl-alpha-D-galactosaminyl}-L-seryl-[protein] + CMP + H(+). It catalyses the reaction a 3-O-[beta-D-galactosyl-(1-&gt;3)-N-acetyl-alpha-D-galactosaminyl]-L-threonyl-[protein] + CMP-N-acetyl-beta-neuraminate = a 3-O-{beta-D-galactosyl-(1-&gt;3)-[N-acetyl-alpha-neuraminosyl-(2-&gt;6)]-N-acetyl-alpha-D-galactosaminyl}-L-threonyl-[protein] + CMP + H(+). The enzyme catalyses a 3-O-[N-acetyl-alpha-neuraminyl-(2-&gt;3)-beta-D-galactosyl-(1-&gt;3)-N-acetyl-alpha-D-galactosaminyl]-L-threonyl-[protein] + CMP-N-acetyl-beta-neuraminate = a 3-O-{alpha-Neu5Ac-(2-&gt;3)-beta-D-Gal-(1-&gt;3)-[alpha-Neu5Ac-(2-&gt;6)]-alpha-D-GalNAc}-L-threonyl-[protein] + CMP + H(+). It functions in the pathway protein modification; protein glycosylation. In terms of biological role, protein sialyltransferase specifically expressed in goblet cells that plays a key role in intestinal host-commensal homeostasis. Conjugates sialic acid with an alpha-2-6 linkage to N-acetylgalactosamine (GalNAc) glycan chains linked to serine or threonine in glycoproteins. Generates sialylated T and Tn antigens.. In Gallus gallus (Chicken), this protein is Alpha-N-acetylgalactosaminide alpha-2,6-sialyltransferase 1 (ST6GALNAC1).